The chain runs to 225 residues: Putative 5'-nucleotidase alr3139 (225 aa).

4 residues coordinate a divalent metal cation: Asp8, Asp9, Ser37, and Asn88.

It belongs to the SurE nucleotidase family. A divalent metal cation is required as a cofactor.

The protein localises to the cytoplasm. The enzyme catalyses a ribonucleoside 5'-phosphate + H2O = a ribonucleoside + phosphate. In terms of biological role, nucleotidase that shows phosphatase activity on nucleoside 5'-monophosphates. This chain is Putative 5'-nucleotidase alr3139, found in Synechocystis sp. (strain ATCC 27184 / PCC 6803 / Kazusa).